The following is a 73-amino-acid chain: N-terminal-borealin-like protein (73 aa).

It belongs to the borealin family. As to quaternary structure, component of the aurora kinase complex composed of at least BIR1, BNL1, IPL1 and SLI15.

The protein resides in the nucleus. It is found in the cytoplasm. The protein localises to the cytoskeleton. Its subcellular location is the spindle. In terms of biological role, component of the aurora kinase complex, also called chromosomal passenger complex (CPC), essential for chromosome segregation and metaphase chromosome alignment. Mediates the SLI15-BIR1 interaction within the CPC. In Saccharomyces cerevisiae (strain ATCC 204508 / S288c) (Baker's yeast), this protein is N-terminal-borealin-like protein (NBL1).